The chain runs to 347 residues: S-adenosylmethionine:tRNA ribosyltransferase-isomerase (347 aa).

The protein belongs to the QueA family. In terms of assembly, monomer.

The protein resides in the cytoplasm. It catalyses the reaction 7-aminomethyl-7-carbaguanosine(34) in tRNA + S-adenosyl-L-methionine = epoxyqueuosine(34) in tRNA + adenine + L-methionine + 2 H(+). Its pathway is tRNA modification; tRNA-queuosine biosynthesis. Functionally, transfers and isomerizes the ribose moiety from AdoMet to the 7-aminomethyl group of 7-deazaguanine (preQ1-tRNA) to give epoxyqueuosine (oQ-tRNA). The sequence is that of S-adenosylmethionine:tRNA ribosyltransferase-isomerase from Xylella fastidiosa (strain M12).